Reading from the N-terminus, the 385-residue chain is Probable caffeine synthase MTL2 (385 aa).

Positions 18, 62, 67, 101, 102, 140, 141, and 157 each coordinate S-adenosyl-L-homocysteine. Positions 158, 161, and 162 each coordinate caffeine. Asparagine 179 lines the Mg(2+) pocket. Position 238 (threonine 238) interacts with caffeine. Residues aspartate 261, phenylalanine 263, and asparagine 264 each contribute to the Mg(2+) site. Residue tyrosine 369 participates in caffeine binding.

It belongs to the methyltransferase superfamily. Type-7 methyltransferase family. Mg(2+) is required as a cofactor.

Its pathway is alkaloid biosynthesis. Functionally, may be involved in the biosynthesis of caffeine. This chain is Probable caffeine synthase MTL2, found in Coffea canephora (Robusta coffee).